The sequence spans 103 residues: Large ribosomal subunit protein uL24 (103 aa).

The protein belongs to the universal ribosomal protein uL24 family. Part of the 50S ribosomal subunit.

Its function is as follows. One of two assembly initiator proteins, it binds directly to the 5'-end of the 23S rRNA, where it nucleates assembly of the 50S subunit. In terms of biological role, one of the proteins that surrounds the polypeptide exit tunnel on the outside of the subunit. The chain is Large ribosomal subunit protein uL24 from Anoxybacillus flavithermus (strain DSM 21510 / WK1).